Here is a 215-residue protein sequence, read N- to C-terminus: 3-demethoxyubiquinol 3-hydroxylase (215 aa).

Fe cation is bound by residues Glu64, Glu94, His97, Glu146, Glu178, and His181.

This sequence belongs to the COQ7 family. Fe cation serves as cofactor.

It localises to the cell membrane. The enzyme catalyses a 5-methoxy-2-methyl-3-(all-trans-polyprenyl)benzene-1,4-diol + AH2 + O2 = a 3-demethylubiquinol + A + H2O. Its pathway is cofactor biosynthesis; ubiquinone biosynthesis. Its function is as follows. Catalyzes the hydroxylation of 2-nonaprenyl-3-methyl-6-methoxy-1,4-benzoquinol during ubiquinone biosynthesis. This is 3-demethoxyubiquinol 3-hydroxylase from Azotobacter vinelandii (strain DJ / ATCC BAA-1303).